Here is a 263-residue protein sequence, read N- to C-terminus: Lens fiber major intrinsic protein (263 aa).

Over 1–9 (MWELRSASF) the chain is Cytoplasmic. The helical transmembrane segment at 10 to 29 (WRAIFAEFFATLFYVFFGLG) threads the bilayer. Topologically, residues 30-41 (ASLRWAPGPLHV) are extracellular. Residues 42-59 (LQVALAFGLALATLVQTV) form a helical membrane-spanning segment. Residues 60–61 (GH) are Cytoplasmic-facing. An intramembrane region (discontinuously helical) is located at residues 62 to 77 (ISGAHVNPAVTFAFLV). The NPA 1 signature appears at 68–70 (NPA). Residues 78-82 (GSQMS) are Cytoplasmic-facing. A helical transmembrane segment spans residues 83–106 (LLRAFCYIAAQLLGAVAGAAVLYS). The Extracellular portion of the chain corresponds to 107-127 (VTPPAVRGNLALNTLHAGVSV). The helical transmembrane segment at 128–148 (GQATTVEIFLTLQFVLCIFAT) threads the bilayer. The Cytoplasmic portion of the chain corresponds to 149-156 (YDERRNGR). A helical membrane pass occupies residues 157 to 175 (MGSVALAVGFSLTLGHLFG). At 176–178 (MYY) the chain is on the extracellular side. Positions 179–193 (TGAGMNPARSFAPAI) form an intramembrane region, discontinuously helical. Residues 184–186 (NPA) carry the NPA 2 motif. The Extracellular segment spans residues 194–200 (LTRNFSN). Residues 201-222 (HWVYWVGPIIGGGLGSLLYDFL) traverse the membrane as a helical segment. Over 223–263 (LFPRLKSVSERLSILKGARPSDSNGQPEGTGEPVELKTQAL) the chain is Cytoplasmic. Residues 227 to 237 (LKSVSERLSIL) form an interaction with CALM region. 3 positions are modified to phosphoserine: S235, S243, and S245. The segment at 240-263 (ARPSDSNGQPEGTGEPVELKTQAL) is disordered. At N246 the chain carries Deamidated asparagine.

The protein belongs to the MIP/aquaporin (TC 1.A.8) family. In terms of assembly, homotetramer; each monomer provides an independent water pore. Two homotetramers on opposing membranes can dimerize, forming a cell-cell junction. Interacts with CALM; the calcium-calmodulin/CALM complex interacts with the cytoplasmic domains of two aquaporins, leading to channel closure. Interacts with BFSP1 (via C-terminus); prevents calcium-dependent inhibition of the water channel activity. Post-translationally, subject to partial proteolytic cleavage in the eye lens core. Partial proteolysis promotes interactions between tetramers from adjoining membranes. In terms of processing, fatty acylated at Met-1 and Lys-238. The acyl modifications, in decreasing order of ion abundance, are: oleoyl (C18:1) &gt; palmitoyl (C16:0) &gt; stearoyl (C18:0) &gt; eicosenoyl (C20:1) &gt; dihomo-gamma-linolenoyl (C20:3) &gt; palmitoleoyl (C16:1) &gt; eicosadienoyl (C20:2).

Its subcellular location is the cell membrane. The protein localises to the cell junction. The enzyme catalyses H2O(in) = H2O(out). With respect to regulation, the water channel activity is inhibited by calcium through calmodulin/CALM. In terms of biological role, aquaporins form homotetrameric transmembrane channels, with each monomer independently mediating water transport across the plasma membrane along its osmotic gradient. Specifically expressed in lens fiber cells, this aquaporin is crucial for maintaining lens water homeostasis and transparency. Beyond water permeability, it also acts as a cell-to-cell adhesion molecule, forming thin junctions between lens fiber cells that are essential for maintaining the ordered structure and transparency of the lens. This chain is Lens fiber major intrinsic protein, found in Mus musculus (Mouse).